The primary structure comprises 1382 residues: MEVKMDELVLDVDVEEATGSELLVKSEPEADLNAVKSSTDLVTVTGPIGKNGEGESSPSEPKWLQQDEPIALWVKWRGKWQAGIRCAKADWPLTTLRGKPTHDRKKYCVIFFPHTKNYSWADMQLVRSINEFPDPIAYKSHKIGLKLVKDLTAARRYIMRKLTVGMFNIVDQFPSEVVSEAARDIIIWKEFAMEATRSTSYHDLGIMLVKLHSMILQRYMDPIWLENSFPLWVQKCNNAVNAESIELLNEEFDNCIKWNEVKSLSESPMQPMLLSEWKTWKHDIAKWFSISRRGVGEIAQPDSKSVFNSDVQASRKRPKLEIRRAETTNATHMESDTSPQGLSAIDSEFFSSRGNTNSPETMKEENPVMNTPENGLDLWDGIVVEAGGSQFMKTKETNGLSHPQDQHINESVLKKPFGSGNKSQQCIAFIESKGRQCVRWANEGDVYCCVHLASRFTTKSMKNEGSPAVEAPMCGGVTVLGTKCKHRSLPGFLYCKKHRPHTGMVKPDDSSSFLVKRKVSEIMSTLETNQCQDLVPFGEPEGPSFEKQEPHGATSFTEMFEHCSQEDNLCIGSCSENSYISCSEFSTKHSLYCEQHLPNWLKRARNGKSRIISKEVFVDLLRGCLSREEKLALHQACDIFYKLFKSVLSLRNSVPMEVQIDWAKTEASRNADAGVGEFLMKLVSNERERLTRIWGFATGADEEDVSLSEYPNRLLAITNTCDDDDDKEKWSFSGFACAICLDSFVRRKLLEIHVEERHHVQFAEKCMLLQCIPCGSHFGDKEQLLVHVQAVHPSECKSLTVASECNLTNGEFSQKPEAGSSQIVVSQNNENTSGVHKFVCKFCGLKFNLLPDLGRHHQAEHMGPSLVGSRGPKKGIRFNTYRMKSGRLSRPNKFKKSLGAVSYRIRNRAGVNMKRRMQGSKSLGTEGNTEAGVSPPLDDSRNFDGVTDAHCSVVSDILLSKVQKAKHRPNNLDILSAARSACCRVSVETSLEAKFGDLPDRIYLKAAKLCGEQGVQVQWHQEGYICSNGCKPVKDPNLLHPLIPRQENDRFGIAVDAGQHSNIELEVDECHCIMEAHHFSKRPFGNTAVLCKDISFGKESVPICVVDDDLWNSEKPYEMPWECFTYVTNSILHPSMDLVKENLQLRCSCRSSVCSPVTCDHVYLFGNDFEDARDIYGKSMRCRFPYDGKQRIILEEGYPVYECNKFCGCSRTCQNRVLQNGIRAKLEVFRTESKGWGLRACEHILRGTFVCEYIGEVLDQQEANKRRNQYGNGDCSYILDIDANINDIGRLMEEELDYAIDATTHGNISRFINHSCSPNLVNHQVIVESMESPLAHIGLYASMDIAAGEEITRDYGRRPVPSEQENEHPCHCKATNCRGLLS.

Disordered regions lie at residues 43–62 and 354–373; these read TVTG…SEPK and GNTN…NTPE. C2H2-type zinc fingers lie at residues 735–758, 769–792, and 838–861; these read FACA…EERH, LQCI…QAVH, and FVCK…QAEH. Residues 915–935 are disordered; the sequence is RRMQGSKSLGTEGNTEAGVSP. Residues 919-928 show a composition bias toward polar residues; the sequence is GSKSLGTEGN. A Pre-SET domain is found at 1145–1221; sequence LRCSCRSSVC…TCQNRVLQNG (77 aa). 9 residues coordinate Zn(2+): C1147, C1149, C1154, C1159, C1182, C1203, C1207, C1209, and C1213. The SET domain maps to 1224–1356; it reads AKLEVFRTES…AGEEITRDYG (133 aa). S-adenosyl-L-methionine-binding positions include 1234–1236, Y1277, and 1313–1314; these read KGW and NH. Position 1316 (C1316) interacts with Zn(2+). Y1355 contacts S-adenosyl-L-methionine. One can recognise a Post-SET domain in the interval 1366-1382; it reads NEHPCHCKATNCRGLLS. Positions 1370, 1372, and 1377 each coordinate Zn(2+).

It belongs to the class V-like SAM-binding methyltransferase superfamily. As to quaternary structure, component of a regulatory complex with LDL1/SWP1. Interacts with LDL1/SWP1.

Its subcellular location is the nucleus. The protein resides in the chromosome. It carries out the reaction L-lysyl-[histone] + S-adenosyl-L-methionine = N(6)-methyl-L-lysyl-[histone] + S-adenosyl-L-homocysteine + H(+). Histone methyltransferase that functions together with its binding partner LDL1/SWP1 as one of the regulators of flower timing in Arabidopsis. Mediates H3K9me2 deposition and regulates gene expression in a DNA methylation-independent manner. Binds DNA through its zinc fingers and represses the expression of a subset of stimulus response genes. May represent a novel mechanism for plants to regulate their chromatin and transcriptional state, which may allow for the adaptability and modulation necessary to rapidly respond to environment or developmental cues. The sequence is that of Histone-lysine N-methyltransferase SUVR5 from Arabidopsis thaliana (Mouse-ear cress).